The sequence spans 832 residues: Vacuolar transmembrane transporter penV (832 aa).

Helical transmembrane passes span 39–59 (LYTQFVISTALGLSAFLAFCI) and 117–137 (FFKFAIRFLLAVFIFAVAIIL). Residues 152–171 (WDNPPGNKTTSPIDGSEKEK) form a disordered region. An N-linked (GlcNAc...) asparagine glycan is attached at asparagine 158. Residues 178–198 (YLWIYVLFAYVFSGLAIYMLL) form a helical membrane-spanning segment. Asparagine 214 carries an N-linked (GlcNAc...) asparagine glycan. Residues 291-322 (NDGNALPLTEQQPRDADDERSGLLSGHDNEHV) are disordered. The segment covering 302-321 (QPRDADDERSGLLSGHDNEH) has biased composition (basic and acidic residues). Transmembrane regions (helical) follow at residues 434–454 (FVIGFLTVFWSVLLVPIASLL), 483–503 (GLPTLAFSLLTVAVPYLYEWL), 524–544 (FFFSFFNLFLLFTVFGTASGF), 560–582 (TIALALANSLEGLAPFYINLLIL), 587–608 (LFPFRLLEFGSVALYPFQFLSA), 623–645 (FSYGFSIPQTILILVICVVYSVF), 650–672 (LICLFGLIYFTVGKFIYKYQLLY), 687–707 (MICNRVFVGLLVHQLAMIGVL), and 713–733 (ITRSLLLVPLLGFTVWFSYWF). The tract at residues 754–777 (PGGGDISPSPSSTLSPPSGLDRDS) is disordered. The span at 759–771 (ISPSPSSTLSPPS) shows a compositional bias: low complexity.

It belongs to the CSC1 (TC 1.A.17) family.

The protein localises to the vacuole membrane. Vacuolar transmembrane transporter that participates in the first stage of the beta-lactam biosynthesis (the formation of the ACV tripeptide), probably taking part in the supply of amino acids from the vacuolar lumen to the vacuole-anchored ACV synthetase. The sequence is that of Vacuolar transmembrane transporter penV from Penicillium rubens (strain ATCC 28089 / DSM 1075 / NRRL 1951 / Wisconsin 54-1255) (Penicillium chrysogenum).